Here is a 207-residue protein sequence, read N- to C-terminus: Uridine kinase (207 aa).

An ATP-binding site is contributed by Gly13–Thr20.

This sequence belongs to the uridine kinase family.

Its subcellular location is the cytoplasm. The enzyme catalyses uridine + ATP = UMP + ADP + H(+). It catalyses the reaction cytidine + ATP = CMP + ADP + H(+). It functions in the pathway pyrimidine metabolism; CTP biosynthesis via salvage pathway; CTP from cytidine: step 1/3. The protein operates within pyrimidine metabolism; UMP biosynthesis via salvage pathway; UMP from uridine: step 1/1. The chain is Uridine kinase from Ureaplasma urealyticum serovar 10 (strain ATCC 33699 / Western).